We begin with the raw amino-acid sequence, 749 residues long: Metabotropic glutamate receptor-like protein M (749 aa).

Residues 1–22 (MIKLILSLIFLIICCNINPSES) form the signal peptide. Over 23 to 385 (FKLITLTTGP…KIEFSSSVQK (363 aa)) the chain is Extracellular. N-linked (GlcNAc...) asparagine glycosylation is found at Asn-67, Asn-164, Asn-257, Asn-271, and Asn-345. The helical transmembrane segment at 386–406 (GFSIVSGCLIAFVILMMVGIV) threads the bilayer. At 407–419 (YYKDTPSIRSASP) the chain is on the cytoplasmic side. A helical transmembrane segment spans residues 420–440 (IFLNFSLIGGIIIYIGIIIWV). Over 441-456 (GPISTHQCNARFWLVT) the chain is Extracellular. Residues 457–477 (LGFSTLIGSLVVKNFRIWLIF) form a helical membrane-spanning segment. Residues 478–492 (DNPELKAIKITNYQL) lie on the Cytoplasmic side of the membrane. A helical transmembrane segment spans residues 493 to 513 (FPWVGLCLVINIVLMAILTSV). Residues 514-544 (GDLKAIEAQGIDSLGKYEYMTVCKMNSAGAS) lie on the Extracellular side of the membrane. A helical membrane pass occupies residues 545–565 (TLYSILAYFAALLLVGVFVSW). The Cytoplasmic segment spans residues 566–579 (KIRIVDIEEFNESK). Residues 580-600 (AIANTLYAVSFCLFVIVPLMI) form a helical membrane-spanning segment. The Extracellular segment spans residues 601–609 (SPQEKQSET). Residues 610 to 630 (IILCVAGLFITTAALLIVFIP) traverse the membrane as a helical segment. Residues 631–749 (KFWRVFIYGK…EEPVKTESQE (119 aa)) lie on the Cytoplasmic side of the membrane. A disordered region spans residues 658-749 (ARAESLSKNS…EEPVKTESQE (92 aa)). The span at 698-716 (SSLSEPNKPTKNNDGNVNV) shows a compositional bias: polar residues. Acidic residues predominate over residues 725–740 (FTDDTISEFDENEVNE).

This sequence in the N-terminal section; belongs to the BMP lipoprotein family. In the C-terminal section; belongs to the G-protein coupled receptor 3 family. GABA-B receptor subfamily.

Its subcellular location is the membrane. The chain is Metabotropic glutamate receptor-like protein M (grlM) from Dictyostelium discoideum (Social amoeba).